The following is a 252-amino-acid chain: UPF0246 protein LJ_0535 (252 aa).

This sequence belongs to the UPF0246 family.

The sequence is that of UPF0246 protein LJ_0535 from Lactobacillus johnsonii (strain CNCM I-12250 / La1 / NCC 533).